The chain runs to 253 residues: AA9 family lytic polysaccharide monooxygenase F (253 aa).

Residues 1–16 form the signal peptide; it reads MKVLATLLASVGLVAA. Position 17 (histidine 17) interacts with Cu(2+). Asparagine 22 carries an N-linked (GlcNAc...) asparagine glycan. 2 disulfides stabilise this stretch: cysteine 75/cysteine 193 and cysteine 163/cysteine 253. Histidine 105 contributes to the Cu(2+) binding site. Asparagine 143 is a glycosylation site (N-linked (GlcNAc...) asparagine). Residues histidine 179 and glutamine 188 each coordinate O2. Cu(2+) is bound at residue tyrosine 190.

It belongs to the polysaccharide monooxygenase AA9 family. Cu(2+) serves as cofactor.

The protein resides in the secreted. It catalyses the reaction [(1-&gt;4)-beta-D-glucosyl]n+m + reduced acceptor + O2 = 4-dehydro-beta-D-glucosyl-[(1-&gt;4)-beta-D-glucosyl]n-1 + [(1-&gt;4)-beta-D-glucosyl]m + acceptor + H2O.. Its function is as follows. Lytic polysaccharide monooxygenase (LPMO) that depolymerizes crystalline and amorphous polysaccharides via the oxidation of scissile alpha- or beta-(1-4)-glycosidic bonds, yielding C1 or C4 oxidation products. Catalysis by LPMOs requires the reduction of the active-site copper from Cu(II) to Cu(I) by a reducing agent and H(2)O(2) or O(2) as a cosubstrate. In Podospora anserina (strain S / ATCC MYA-4624 / DSM 980 / FGSC 10383) (Pleurage anserina), this protein is AA9 family lytic polysaccharide monooxygenase F.